A 152-amino-acid polypeptide reads, in one-letter code: SsrA-binding protein (152 aa).

The protein belongs to the SmpB family.

Its subcellular location is the cytoplasm. Functionally, required for rescue of stalled ribosomes mediated by trans-translation. Binds to transfer-messenger RNA (tmRNA), required for stable association of tmRNA with ribosomes. tmRNA and SmpB together mimic tRNA shape, replacing the anticodon stem-loop with SmpB. tmRNA is encoded by the ssrA gene; the 2 termini fold to resemble tRNA(Ala) and it encodes a 'tag peptide', a short internal open reading frame. During trans-translation Ala-aminoacylated tmRNA acts like a tRNA, entering the A-site of stalled ribosomes, displacing the stalled mRNA. The ribosome then switches to translate the ORF on the tmRNA; the nascent peptide is terminated with the 'tag peptide' encoded by the tmRNA and targeted for degradation. The ribosome is freed to recommence translation, which seems to be the essential function of trans-translation. This chain is SsrA-binding protein, found in Rickettsia africae (strain ESF-5).